The chain runs to 159 residues: Elicitor-responsive protein 1 (159 aa).

The C2 domain maps to 1–112 (MAGSGVLEVH…SLGMEHGTWE (112 aa)). Residues Asp-21 and Asp-30 each contribute to the Ca(2+) site. Position 44 is a phosphoserine; by CPK (Ser-44). Ca(2+)-binding residues include Asp-81, Asp-83, Ser-86, and Asp-89.

The cofactor is Ca(2+). Post-translationally, phosphorylated at Ser-44 by CPK18 in a calcium-dependent manner. Isoform 2 is expressed in young vascular tissues and tiller buds.

It is found in the cytoplasm. It localises to the cell membrane. Functionally, may play a role in plant defense signaling. Isoform 2 binds to phospholipids in a Ca(2+)-dependent manner in response to pathogen elicitors. This is Elicitor-responsive protein 1 (ERG1) from Oryza sativa subsp. japonica (Rice).